Consider the following 323-residue polypeptide: MTKTFRNPQLTKNGELKHLLSIEGLSRDMITHILDTASQFVSLSDSDRDVKKVPLLRGKSVFNLFFENSTRTRTTFEIAAKRLSADVLNLNINASSTSKGESLLDTINNLSAMSADMFVVRHASSGAPYLIAEHVAPHVHVINAGDGRHAHPTQGLLDMYTIRHFKKDFTQLRVAIVGDILHSRVARSDIHALTTLGVPEVRAIGPRTLLPSGLEQMGVRVFHNMEEGLKDVDVVIMLRLQNERMSGALLPSAQEYFKAFGLTPERLALAAPDAIVMHPGPMNRGVEIDSAVADGPQSVILNQVTFGIAVRMAVMGIVAGNSD.

Carbamoyl phosphate-binding residues include arginine 71 and threonine 72. Lysine 99 serves as a coordination point for L-aspartate. Arginine 121, histidine 151, and glutamine 154 together coordinate carbamoyl phosphate. Positions 184 and 239 each coordinate L-aspartate. Carbamoyl phosphate contacts are provided by glycine 280 and proline 281.

This sequence belongs to the aspartate/ornithine carbamoyltransferase superfamily. ATCase family. In terms of assembly, heterododecamer (2C3:3R2) of six catalytic PyrB chains organized as two trimers (C3), and six regulatory PyrI chains organized as three dimers (R2).

The enzyme catalyses carbamoyl phosphate + L-aspartate = N-carbamoyl-L-aspartate + phosphate + H(+). Its pathway is pyrimidine metabolism; UMP biosynthesis via de novo pathway; (S)-dihydroorotate from bicarbonate: step 2/3. Its function is as follows. Catalyzes the condensation of carbamoyl phosphate and aspartate to form carbamoyl aspartate and inorganic phosphate, the committed step in the de novo pyrimidine nucleotide biosynthesis pathway. The protein is Aspartate carbamoyltransferase catalytic subunit of Cupriavidus pinatubonensis (strain JMP 134 / LMG 1197) (Cupriavidus necator (strain JMP 134)).